The primary structure comprises 467 residues: Ethanolamine-phosphate phospho-lyase homolog 1 (467 aa).

The residue at position 307 (Lys-307) is an N6-(pyridoxal phosphate)lysine.

This sequence belongs to the class-III pyridoxal-phosphate-dependent aminotransferase family. Pyridoxal 5'-phosphate is required as a cofactor.

The chain is Ethanolamine-phosphate phospho-lyase homolog 1 from Caenorhabditis elegans.